A 277-amino-acid polypeptide reads, in one-letter code: Phosphatidylglycerol--prolipoprotein diacylglyceryl transferase (277 aa).

4 helical membrane-spanning segments follow: residues 18-38 (ISVKWYGVIIASAVVIALLLA), 51-71 (IIVDLLIWAIPISIISARIYY), 89-109 (IWHGGIAIYGALIGAVLTAVI), and 116-136 (ISFWKLADVVAPSLIIAQAIG). An a 1,2-diacyl-sn-glycero-3-phospho-(1'-sn-glycerol)-binding site is contributed by arginine 137. 3 helical membrane passes run 177–197 (QPTFLYESLWNVLGFIVLLII), 205–225 (GELFLSYVIWYSFGRFFIEGM), and 235–255 (FRVSQVLSLLLIVLSIGLIIY).

The protein belongs to the Lgt family.

The protein resides in the cell membrane. It carries out the reaction L-cysteinyl-[prolipoprotein] + a 1,2-diacyl-sn-glycero-3-phospho-(1'-sn-glycerol) = an S-1,2-diacyl-sn-glyceryl-L-cysteinyl-[prolipoprotein] + sn-glycerol 1-phosphate + H(+). The protein operates within protein modification; lipoprotein biosynthesis (diacylglyceryl transfer). Functionally, catalyzes the transfer of the diacylglyceryl group from phosphatidylglycerol to the sulfhydryl group of the N-terminal cysteine of a prolipoprotein, the first step in the formation of mature lipoproteins. This is Phosphatidylglycerol--prolipoprotein diacylglyceryl transferase from Listeria innocua serovar 6a (strain ATCC BAA-680 / CLIP 11262).